Consider the following 639-residue polypeptide: Pheromone-processing carboxypeptidase kex1 (639 aa).

An N-terminal signal peptide occupies residues 1 to 30 (MAFSHAPSGWRTALLAGLIATVAWLPAIVA). Residues 31 to 517 (QEKTQADYFI…KAAEWKAYTR (487 aa)) lie on the Lumenal side of the membrane. An N-linked (GlcNAc...) asparagine glycan is attached at Asn-119. Active-site residues include Ser-183 and Asp-384. Asn-435 and Asn-443 each carry an N-linked (GlcNAc...) asparagine glycan. Residue His-446 is part of the active site. The tract at residues 477 to 504 (DSLIDGEKGPLTSVGDHPNSTKAEEDKS) is disordered. The N-linked (GlcNAc...) asparagine glycan is linked to Asn-495. Residues 518 to 538 (SGEVALVIAVIVACICGFLLC) traverse the membrane as a helical segment. Residues 539–639 (RSRRAKSAYK…DRGRRKEESR (101 aa)) are Cytoplasmic-facing. Residues 580–639 (ADFDERELDEVPKKSGKGYGQISSEKGRVPHNDSSFSLGVDSDDDEAGSSDRGRRKEESR) are disordered. The span at 628 to 639 (SSDRGRRKEESR) shows a compositional bias: basic and acidic residues.

This sequence belongs to the peptidase S10 family.

The protein localises to the golgi apparatus. It is found in the trans-Golgi network membrane. The enzyme catalyses Preferential release of a C-terminal arginine or lysine residue.. Protease with a carboxypeptidase B-like function involved in the C-terminal processing of the lysine and arginine residues from protein precursors. Promotes cell fusion and is involved in the programmed cell death. This Pyrenophora tritici-repentis (strain Pt-1C-BFP) (Wheat tan spot fungus) protein is Pheromone-processing carboxypeptidase kex1 (kex1).